A 182-amino-acid polypeptide reads, in one-letter code: Large ribosomal subunit protein uL5 (182 aa).

Belongs to the universal ribosomal protein uL5 family. In terms of assembly, part of the 50S ribosomal subunit; part of the 5S rRNA/L5/L18/L25 subcomplex. Contacts the 5S rRNA and the P site tRNA. Forms a bridge to the 30S subunit in the 70S ribosome.

In terms of biological role, this is one of the proteins that bind and probably mediate the attachment of the 5S RNA into the large ribosomal subunit, where it forms part of the central protuberance. In the 70S ribosome it contacts protein S13 of the 30S subunit (bridge B1b), connecting the 2 subunits; this bridge is implicated in subunit movement. Contacts the P site tRNA; the 5S rRNA and some of its associated proteins might help stabilize positioning of ribosome-bound tRNAs. This Trichormus variabilis (strain ATCC 29413 / PCC 7937) (Anabaena variabilis) protein is Large ribosomal subunit protein uL5.